Reading from the N-terminus, the 458-residue chain is ATP synthase subunit beta (458 aa).

147-154 contacts ATP; sequence GGAGVGKT.

This sequence belongs to the ATPase alpha/beta chains family. As to quaternary structure, F-type ATPases have 2 components, CF(1) - the catalytic core - and CF(0) - the membrane proton channel. CF(1) has five subunits: alpha(3), beta(3), gamma(1), delta(1), epsilon(1). CF(0) has three main subunits: a(1), b(2) and c(9-12). The alpha and beta chains form an alternating ring which encloses part of the gamma chain. CF(1) is attached to CF(0) by a central stalk formed by the gamma and epsilon chains, while a peripheral stalk is formed by the delta and b chains.

Its subcellular location is the cell inner membrane. It catalyses the reaction ATP + H2O + 4 H(+)(in) = ADP + phosphate + 5 H(+)(out). Functionally, produces ATP from ADP in the presence of a proton gradient across the membrane. The catalytic sites are hosted primarily by the beta subunits. In Chromohalobacter salexigens (strain ATCC BAA-138 / DSM 3043 / CIP 106854 / NCIMB 13768 / 1H11), this protein is ATP synthase subunit beta.